Consider the following 88-residue polypeptide: Small ribosomal subunit protein uS17 (88 aa).

It belongs to the universal ribosomal protein uS17 family. Part of the 30S ribosomal subunit.

Its function is as follows. One of the primary rRNA binding proteins, it binds specifically to the 5'-end of 16S ribosomal RNA. The sequence is that of Small ribosomal subunit protein uS17 from Prochlorococcus marinus (strain MIT 9312).